The primary structure comprises 90 residues: Probable Fe(2+)-trafficking protein (90 aa).

This sequence belongs to the Fe(2+)-trafficking protein family. Monomer.

Its function is as follows. Could be a mediator in iron transactions between iron acquisition and iron-requiring processes, such as synthesis and/or repair of Fe-S clusters in biosynthetic enzymes. The chain is Probable Fe(2+)-trafficking protein from Yersinia pseudotuberculosis serotype O:1b (strain IP 31758).